A 60-amino-acid chain; its full sequence is Cytotoxin 2 (60 aa).

4 disulfides stabilise this stretch: cysteine 3-cysteine 21, cysteine 14-cysteine 38, cysteine 42-cysteine 53, and cysteine 54-cysteine 59.

Belongs to the three-finger toxin family. Short-chain subfamily. Type IA cytotoxin sub-subfamily. Monomer in solution; Homodimer and oligomer in the presence of negatively charged lipids forming a pore with a size ranging between 20 and 30 Angstroms. Expressed by the venom gland.

The protein localises to the secreted. Its subcellular location is the target cell membrane. Its function is as follows. Shows cytolytic activity on many different cells by forming pore in lipid membranes. In vivo, increases heart rate or kills the animal by cardiac arrest. In addition, it binds to heparin with high affinity, interacts with Kv channel-interacting protein 1 (KCNIP1) in a calcium-independent manner, and binds to integrin alpha-V/beta-3 (ITGAV/ITGB3) with moderate affinity. The polypeptide is Cytotoxin 2 (Naja mossambica (Mozambique spitting cobra)).